The following is a 1377-amino-acid chain: DNA-directed RNA polymerase subunit beta (1377 aa).

Belongs to the RNA polymerase beta chain family. The RNAP catalytic core consists of 2 alpha, 1 beta, 1 beta' and 1 omega subunit. When a sigma factor is associated with the core the holoenzyme is formed, which can initiate transcription.

The enzyme catalyses RNA(n) + a ribonucleoside 5'-triphosphate = RNA(n+1) + diphosphate. Its function is as follows. DNA-dependent RNA polymerase catalyzes the transcription of DNA into RNA using the four ribonucleoside triphosphates as substrates. The protein is DNA-directed RNA polymerase subunit beta of Brucella melitensis biotype 2 (strain ATCC 23457).